Consider the following 100-residue polypeptide: UPF0251 protein VV2_0946 (100 aa).

The protein belongs to the UPF0251 family.

In Vibrio vulnificus (strain CMCP6), this protein is UPF0251 protein VV2_0946.